The following is a 312-amino-acid chain: Phosphate system positive regulatory protein PHO4 (312 aa).

The interaction with PHO80 stretch occupies residues 1–31; it reads MGRTTSEGIHGFVDDLEPKSSILDKVGDFIT. Positions 35-71 are disordered; sequence KRHDGREDFNEQNDELNSQENHNSSENGNENENEQDS. Residues 49–62 show a composition bias toward low complexity; the sequence is ELNSQENHNSSENG. A 9aaTAD motif is present at residues 75 to 83; that stretch reads DDLDRAFEL. Positions 75–99 are transcription activation domain; the sequence is DDLDRAFELVEGMDMDWMMPSHAHH. Phosphoserine; by PHO85 occurs at positions 100, 114, 128, and 152. 2 stretches are compositionally biased toward polar residues: residues 138 to 154 and 196 to 210; these read TTSANKVTKNKSNSSPY and PSNSTRRVSPVTAKT. The tract at residues 138–259 is disordered; it reads TTSANKVTKN…DKRESHKHAE (122 aa). The short motif at 140–166 is the Nuclear localization signal element; the sequence is SANKVTKNKSNSSPYLNKRRGKPGPDS. Positions 156–200 are interaction with PHO80; that stretch reads NKRRGKPGPDSATSLFELPDSVIPTPKPKPKPKQYPKVILPSNST. An interaction with PHO2 region spans residues 201 to 218; that stretch reads RRVSPVTAKTSSSAEGVV. The tract at residues 203-227 is involved in oligomerization; that stretch reads VSPVTAKTSSSAEGVVVASESPVIA. At S204 the chain carries Phosphoserine. A compositionally biased stretch (low complexity) spans 211–235; it reads SSSAEGVVVASESPVIAPHGSSHSR. Residue S223 is modified to Phosphoserine; by PHO85. A phosphoserine mark is found at S242 and S243. Basic and acidic residues predominate over residues 248-259; the sequence is DDDKRESHKHAE. One can recognise a bHLH domain in the interval 250–306; that stretch reads DKRESHKHAEQARRNRLAVALHELASLIPAEWKQQNVSAAPSKATTVEAACRYIRHL.

As to quaternary structure, binds DNA as a homodimer. Interacts with transcription factor PHO2 and binds cooperatively to PHO5 UAS. Interacts with the cyclin-CDK PHO80-PHO85 and the CDK inhibitor (CKI) PHO81. Phosphorylated by the cyclin-CDK PHO80-PHO85 at five residues under high-phosphate conditions, preventing PHO4 from activating the structural PHO genes. Phosphorylation of Ser-114 and Ser-128 promotes nuclear export. Phosphorylation of Ser-152 decreases nuclear import. Phosphorylation of Ser-223 decreases the binding affinity for PHO2.

It is found in the cytoplasm. The protein localises to the nucleus. Transcriptional activator that regulates the expression of repressible phosphatase under phosphate starvation conditions. Binds to the upstream activating sequence (UAS) of several phosphatase encoding PHO genes. Inhibited by the cyclin-CDK PHO80-PHO85 under high-phosphate conditions. The sequence is that of Phosphate system positive regulatory protein PHO4 (PHO4) from Saccharomyces cerevisiae (strain ATCC 204508 / S288c) (Baker's yeast).